A 339-amino-acid chain; its full sequence is Ketol-acid reductoisomerase (NADP(+)) (339 aa).

The KARI N-terminal Rossmann domain maps to 1–182; that stretch reads MRVYYDRDAD…GGGRAGIIET (182 aa). Residues 24-27, Arg-48, Ser-51, Ser-53, and 83-86 each bind NADP(+); these read YGSQ and DELQ. Residue His-108 is part of the active site. Residue Gly-134 participates in NADP(+) binding. A KARI C-terminal knotted domain is found at 183-328; that stretch reads SFREETETDL…ARLRDMMPWI (146 aa). Positions 191, 195, 227, and 231 each coordinate Mg(2+). Ser-252 contacts substrate.

This sequence belongs to the ketol-acid reductoisomerase family. Mg(2+) serves as cofactor.

It carries out the reaction (2R)-2,3-dihydroxy-3-methylbutanoate + NADP(+) = (2S)-2-acetolactate + NADPH + H(+). The enzyme catalyses (2R,3R)-2,3-dihydroxy-3-methylpentanoate + NADP(+) = (S)-2-ethyl-2-hydroxy-3-oxobutanoate + NADPH + H(+). The protein operates within amino-acid biosynthesis; L-isoleucine biosynthesis; L-isoleucine from 2-oxobutanoate: step 2/4. It functions in the pathway amino-acid biosynthesis; L-valine biosynthesis; L-valine from pyruvate: step 2/4. Its function is as follows. Involved in the biosynthesis of branched-chain amino acids (BCAA). Catalyzes an alkyl-migration followed by a ketol-acid reduction of (S)-2-acetolactate (S2AL) to yield (R)-2,3-dihydroxy-isovalerate. In the isomerase reaction, S2AL is rearranged via a Mg-dependent methyl migration to produce 3-hydroxy-3-methyl-2-ketobutyrate (HMKB). In the reductase reaction, this 2-ketoacid undergoes a metal-dependent reduction by NADPH to yield (R)-2,3-dihydroxy-isovalerate. This Afipia carboxidovorans (strain ATCC 49405 / DSM 1227 / KCTC 32145 / OM5) (Oligotropha carboxidovorans) protein is Ketol-acid reductoisomerase (NADP(+)).